Reading from the N-terminus, the 634-residue chain is RING finger protein 207 (634 aa).

The RING-type zinc finger occupies 25–63 (CHLCQEQYEHPCLLDCYHTFCASCLRGRVADSRLTCPVC). Residues 93-145 (EETVQCANCDLECKKQDVDAMYYCNTCCQPLCRDCRETTHKAKMFSRHEIVSL) form a B box-type; atypical zinc finger. The Zn(2+) site is built by Cys98, Cys101, Cys127, and His132. The segment at 575-634 (YEDSTSTADTQPSNELSCNTEDNWTLNSLSEETNPKNKDYYRTNKQKNTTDSTNRKEIPM) is disordered. Over residues 577 to 606 (DSTSTADTQPSNELSCNTEDNWTLNSLSEE) the composition is skewed to polar residues. A compositionally biased stretch (basic and acidic residues) spans 607 to 616 (TNPKNKDYYR).

Its subcellular location is the cytoplasm. In terms of biological role, plays a role in cardiac repolarization possibly by stabilizing membrane expression of the potassium channel kcnh6a/zerg, or by assisting its synthesis, folding or export from the endoplasmic reticulum, in a heat shock protein-dependent manner. This Danio rerio (Zebrafish) protein is RING finger protein 207 (rnf207b).